A 251-amino-acid polypeptide reads, in one-letter code: Regulator of G-protein signaling 9-binding protein B (251 aa).

Topologically, residues 1–230 (MPLQNVKVAD…NSKGCCSDGQ (230 aa)) are cytoplasmic. Coiled coils occupy residues 52 to 94 (HLRD…ELER) and 158 to 187 (ANKA…MKVN). The helical; Anchor for type IV membrane protein transmembrane segment at 231 to 250 (LIVFLLLCGTALVAITLYSI) threads the bilayer. Residue Leu-251 is a topological domain, extracellular.

This sequence belongs to the RGS7BP/RGS9BP family.

It localises to the membrane. In terms of biological role, regulator of G protein-coupled receptor (GPCR) signaling. Probably acts by regulating the activity of some 'R7' family protein (RGS6, RGS7, RGS9 and/or RGS11). The polypeptide is Regulator of G-protein signaling 9-binding protein B (rgs9bp-b) (Xenopus laevis (African clawed frog)).